The primary structure comprises 156 residues: 13 kDa prolamin C (156 aa).

An N-terminal signal peptide occupies residues 1-19 (MKIIFVFALLAIVACNASA). The octapeptide unique to cereal prolamins stretch occupies residues 77 to 84 (QQQCCQQL).

This sequence belongs to the prolamin family.

Its subcellular location is the vacuole. It localises to the aleurone grain. Functionally, seed storage protein; serves as a source of nitrogen, carbon and sulfur for the young developing seedling. The chain is 13 kDa prolamin C (PROLM25) from Oryza sativa subsp. japonica (Rice).